The primary structure comprises 188 residues: Large ribosomal subunit protein bL9 (188 aa).

The segment covering 149–170 (RSEEEAERQARGEEIGVEKEEP) has biased composition (basic and acidic residues). Positions 149–188 (RSEEEAERQARGEEIGVEKEEPSGFVEEALEETVEAPAEA) are disordered.

The protein belongs to the bacterial ribosomal protein bL9 family.

Its function is as follows. Binds to the 23S rRNA. The protein is Large ribosomal subunit protein bL9 of Gluconacetobacter diazotrophicus (strain ATCC 49037 / DSM 5601 / CCUG 37298 / CIP 103539 / LMG 7603 / PAl5).